Reading from the N-terminus, the 130-residue chain is Ribosome-binding factor A (130 aa).

The protein belongs to the RbfA family. Monomer. Binds 30S ribosomal subunits, but not 50S ribosomal subunits or 70S ribosomes.

The protein localises to the cytoplasm. Functionally, one of several proteins that assist in the late maturation steps of the functional core of the 30S ribosomal subunit. Associates with free 30S ribosomal subunits (but not with 30S subunits that are part of 70S ribosomes or polysomes). Required for efficient processing of 16S rRNA. May interact with the 5'-terminal helix region of 16S rRNA. The chain is Ribosome-binding factor A from Lachnospira eligens (strain ATCC 27750 / DSM 3376 / VPI C15-48 / C15-B4) (Eubacterium eligens).